Here is a 464-residue protein sequence, read N- to C-terminus: Secretion-regulating guanine nucleotide exchange factor (464 aa).

RCC1 repeat units follow at residues 15–67 (AVLF…VTDG), 68–119 (GDLF…LTEK), 120–171 (GQVL…TTAT), 172–230 (GSVF…LTDT), 231–283 (GELY…KTET), 284–351 (GKVF…VIRD), and 352–402 (KCCS…LAVC). Residues 422–464 (DDTENTESQGAVDRDRLEGETISDLNPDRTRNGGGGCESETVQ) form a disordered region. Ser429 bears the Phosphoserine mark.

Interacts with SEC5. The interaction occurs only in the presence of magnesium or manganese and is stimulated by dCTP or GTP.

The protein localises to the cytoplasm. Its subcellular location is the nucleus. Functionally, probable guanine nucleotide exchange factor (GEF), which may be involved in the secretion process. The sequence is that of Secretion-regulating guanine nucleotide exchange factor (Sergef) from Mus musculus (Mouse).